Here is a 168-residue protein sequence, read N- to C-terminus: Transcription antitermination protein NusB (168 aa).

It belongs to the NusB family.

Involved in transcription antitermination. Required for transcription of ribosomal RNA (rRNA) genes. Binds specifically to the boxA antiterminator sequence of the ribosomal RNA (rrn) operons. In Deinococcus deserti (strain DSM 17065 / CIP 109153 / LMG 22923 / VCD115), this protein is Transcription antitermination protein NusB.